The primary structure comprises 189 residues: GTP cyclohydrolase 1 (189 aa).

Zn(2+) contacts are provided by Cys-79, His-82, and Cys-150.

This sequence belongs to the GTP cyclohydrolase I family. As to quaternary structure, toroid-shaped homodecamer, composed of two pentamers of five dimers.

It carries out the reaction GTP + H2O = 7,8-dihydroneopterin 3'-triphosphate + formate + H(+). It participates in cofactor biosynthesis; 7,8-dihydroneopterin triphosphate biosynthesis; 7,8-dihydroneopterin triphosphate from GTP: step 1/1. This chain is GTP cyclohydrolase 1, found in Rickettsia massiliae (strain Mtu5).